The sequence spans 429 residues: C4-dicarboxylate transport protein (429 aa).

The next 8 helical transmembrane spans lie at 3–23 (VSIFKTLYFQVLTAITIGVLL), 44–64 (LIKMIIAPVIFCTVVTGIAGM), 76–96 (IALLYFEIVSTLALLIGLVVV), 144–164 (AFASGNILQVLLFAVLFGFAL), 184–204 (VIFGVINMIMRLAPLGAFGAM), 222–242 (LILCFYLTCILFVVLVLGTIA), 331–351 (TLLVVLLLSSKGAAGVTGSGF), and 352–372 (IVLAATISAVGHLPLAGLALI).

The protein belongs to the dicarboxylate/amino acid:cation symporter (DAACS) (TC 2.A.23) family.

It is found in the cell inner membrane. Responsible for the transport of dicarboxylates such as succinate, fumarate, and malate from the periplasm across the membrane. The chain is C4-dicarboxylate transport protein from Yersinia pseudotuberculosis serotype O:1b (strain IP 31758).